Here is a 545-residue protein sequence, read N- to C-terminus: Sulfite oxidase, mitochondrial (545 aa).

The N-terminal 79 residues, 1–79, are a transit peptide targeting the mitochondrion; sequence MLLLHRAVVL…YQDHRCRAAQ (79 aa). The Cytochrome b5 heme-binding domain maps to 82 to 161; that stretch reads TRIYTKEEVS…LAQYKVGELN (80 aa). Position 118 (His-118) interacts with heme b. Ser-123 is modified (phosphoserine). 3 residues coordinate heme b: His-143, Gln-145, and His-147. The tract at residues 165-174 is hinge; sequence KVAPTVETSD. Residues 175-401 are moco domain; sequence PYADDPVRHP…YSHWQRRDYK (227 aa). Mo-molybdopterin contacts are provided by residues 215-219, Cys-264, Asp-322, His-361, Arg-366, and 377-379; these read FTRNH and HVK. A homodimerization region spans residues 402 to 538; it reads GFSPSVDWDT…RGVLSNAWHR (137 aa).

Homodimer. It depends on heme b as a cofactor. Requires Mo-molybdopterin as cofactor.

The protein localises to the mitochondrion intermembrane space. The enzyme catalyses sulfite + O2 + H2O = sulfate + H2O2. Its pathway is energy metabolism; sulfur metabolism. Its function is as follows. Catalyzes the oxidation of sulfite to sulfate, the terminal reaction in the oxidative degradation of sulfur-containing amino acids. This Macaca fascicularis (Crab-eating macaque) protein is Sulfite oxidase, mitochondrial (SUOX).